Reading from the N-terminus, the 160-residue chain is Phosphopantetheine adenylyltransferase (160 aa).

Residue serine 9 coordinates substrate. ATP is bound by residues 9–10 (SF) and histidine 17. 3 residues coordinate substrate: lysine 41, threonine 73, and arginine 87. Residues 88 to 90 (GMR), glutamate 98, and 123 to 129 (YTFFSSS) each bind ATP.

This sequence belongs to the bacterial CoaD family. As to quaternary structure, homohexamer. Mg(2+) serves as cofactor.

Its subcellular location is the cytoplasm. The catalysed reaction is (R)-4'-phosphopantetheine + ATP + H(+) = 3'-dephospho-CoA + diphosphate. Its pathway is cofactor biosynthesis; coenzyme A biosynthesis; CoA from (R)-pantothenate: step 4/5. Reversibly transfers an adenylyl group from ATP to 4'-phosphopantetheine, yielding dephospho-CoA (dPCoA) and pyrophosphate. The sequence is that of Phosphopantetheine adenylyltransferase from Roseiflexus castenholzii (strain DSM 13941 / HLO8).